The sequence spans 442 residues: Histidinol dehydrogenase (442 aa).

The NAD(+) site is built by tyrosine 138, glutamine 199, and asparagine 222. The substrate site is built by serine 245, glutamine 267, and histidine 270. Zn(2+) is bound by residues glutamine 267 and histidine 270. Active-site proton acceptor residues include glutamate 335 and histidine 336. Substrate contacts are provided by histidine 336, aspartate 369, glutamate 423, and histidine 428. Aspartate 369 provides a ligand contact to Zn(2+). Histidine 428 lines the Zn(2+) pocket.

It belongs to the histidinol dehydrogenase family. The cofactor is Zn(2+).

It carries out the reaction L-histidinol + 2 NAD(+) + H2O = L-histidine + 2 NADH + 3 H(+). Its pathway is amino-acid biosynthesis; L-histidine biosynthesis; L-histidine from 5-phospho-alpha-D-ribose 1-diphosphate: step 9/9. In terms of biological role, catalyzes the sequential NAD-dependent oxidations of L-histidinol to L-histidinaldehyde and then to L-histidine. This is Histidinol dehydrogenase from Ralstonia nicotianae (strain ATCC BAA-1114 / GMI1000) (Ralstonia solanacearum).